The chain runs to 358 residues: Putative UDP-kanosamine synthase oxidoreductase subunit (358 aa).

In terms of assembly, interacts with RifK.

The catalysed reaction is UDP-alpha-D-glucose + NAD(+) = UDP-3-oxo-alpha-D-glucose + NADH + H(+). The protein operates within antibiotic biosynthesis; rifamycin B biosynthesis. Its function is as follows. In a complex with RifK, RifL may catalyze the oxidation of UDP-glucose to UDP-3-keto-D-glucose, which would then be used by RifK to produce UDP-kanosamine. Is not able to use dTDP-glucose as substrate. The polypeptide is Putative UDP-kanosamine synthase oxidoreductase subunit (rifL) (Amycolatopsis mediterranei (strain S699) (Nocardia mediterranei)).